The chain runs to 295 residues: Protoheme IX farnesyltransferase 2 (295 aa).

9 consecutive transmembrane segments (helical) span residues isoleucine 9–alanine 29, leucine 36–phenylalanine 56, valine 85–alanine 105, leucine 108–leucine 128, glycine 135–serine 155, leucine 163–phenylalanine 183, isoleucine 209–alanine 229, glycine 230–threonine 250, and lysine 263–phenylalanine 283.

The protein belongs to the UbiA prenyltransferase family. Protoheme IX farnesyltransferase subfamily.

It localises to the cell inner membrane. It catalyses the reaction heme b + (2E,6E)-farnesyl diphosphate + H2O = Fe(II)-heme o + diphosphate. Its pathway is porphyrin-containing compound metabolism; heme O biosynthesis; heme O from protoheme: step 1/1. In terms of biological role, converts heme B (protoheme IX) to heme O by substitution of the vinyl group on carbon 2 of heme B porphyrin ring with a hydroxyethyl farnesyl side group. The protein is Protoheme IX farnesyltransferase 2 of Pseudomonas fluorescens (strain ATCC BAA-477 / NRRL B-23932 / Pf-5).